Here is a 423-residue protein sequence, read N- to C-terminus: Serine hydroxymethyltransferase (423 aa).

(6S)-5,6,7,8-tetrahydrofolate is bound by residues leucine 120 and 124 to 126; that span reads GHL. The residue at position 229 (lysine 229) is an N6-(pyridoxal phosphate)lysine. A (6S)-5,6,7,8-tetrahydrofolate-binding site is contributed by 353 to 355; sequence SPF.

The protein belongs to the SHMT family. As to quaternary structure, homodimer. Requires pyridoxal 5'-phosphate as cofactor.

Its subcellular location is the cytoplasm. The enzyme catalyses (6R)-5,10-methylene-5,6,7,8-tetrahydrofolate + glycine + H2O = (6S)-5,6,7,8-tetrahydrofolate + L-serine. Its pathway is one-carbon metabolism; tetrahydrofolate interconversion. The protein operates within amino-acid biosynthesis; glycine biosynthesis; glycine from L-serine: step 1/1. Its function is as follows. Catalyzes the reversible interconversion of serine and glycine with tetrahydrofolate (THF) serving as the one-carbon carrier. This reaction serves as the major source of one-carbon groups required for the biosynthesis of purines, thymidylate, methionine, and other important biomolecules. Also exhibits THF-independent aldolase activity toward beta-hydroxyamino acids, producing glycine and aldehydes, via a retro-aldol mechanism. This Prochlorococcus marinus (strain AS9601) protein is Serine hydroxymethyltransferase.